We begin with the raw amino-acid sequence, 1387 residues long: Dicer-like protein 2-1 (1387 aa).

The Helicase ATP-binding domain occupies 26-205 (MFEASLKENI…LLKIESNLDA (180 aa)). 39–46 (MGTGSGKT) is an ATP binding site. Positions 146–149 (DEAH) match the DEAH box motif. The region spanning 370-535 (KFRSLLEFLD…AYEDDERRLR (166 aa)) is the Helicase C-terminal domain. One can recognise a Dicer dsRNA-binding fold domain in the interval 565–659 (AVAHLNHFCA…LPFKRNLELK (95 aa)). RNase III domains lie at 915 to 1055 (ATRL…IDGG) and 1094 to 1277 (DDHL…IDSH). Residues glutamate 1133, aspartate 1263, and glutamate 1266 each coordinate Mg(2+).

Belongs to the helicase family. Dicer subfamily. Requires Mg(2+) as cofactor. It depends on Mn(2+) as a cofactor.

Functionally, dicer-like endonuclease involved in cleaving double-stranded RNA in the RNA interference (RNAi) pathway. Produces 21 to 25 bp dsRNAs (siRNAs) which target the selective destruction of homologous RNAs leading to sequence-specific suppression of gene expression, called post-transcriptional gene silencing (PTGS). Part of a broad host defense response against viral infection and transposons. This Aspergillus niger (strain ATCC MYA-4892 / CBS 513.88 / FGSC A1513) protein is Dicer-like protein 2-1 (dcl2-1).